Here is a 545-residue protein sequence, read N- to C-terminus: Threonine--tRNA ligase catalytic subunit (545 aa).

Residues 139–433 (DHRLIGEKLD…LLEHFKGKLP (295 aa)) form a catalytic region. The Zn(2+) site is built by cysteine 231, histidine 282, and histidine 410.

It belongs to the class-II aminoacyl-tRNA synthetase family. Homodimer. Probably interacts with its editing subunit. The cofactor is Zn(2+).

The protein localises to the cytoplasm. It carries out the reaction tRNA(Thr) + L-threonine + ATP = L-threonyl-tRNA(Thr) + AMP + diphosphate + H(+). In terms of biological role, catalyzes the attachment of threonine to tRNA(Thr) in a two-step reaction: L-threonine is first activated by ATP to form Thr-AMP and then transferred to the acceptor end of tRNA(Thr). Also activates L-serine and transfers it to tRNA(Thr) but cannot deacylate incorrectly charged amino acid; unlike most archaea the editing function is found in a freestanding protein. The chain is Threonine--tRNA ligase catalytic subunit from Saccharolobus islandicus (strain Y.G.57.14 / Yellowstone #1) (Sulfolobus islandicus).